A 1012-amino-acid polypeptide reads, in one-letter code: Structural polyprotein (1012 aa).

Residue Asp30 coordinates a divalent metal cation. Residues 513–755 form the Peptidase S50 domain; that stretch reads ADKGYEVVAN…AGRQYHLAMA (243 aa). Ser652 acts as the Nucleophile in catalysis. The active site involves Lys692. Residues 970-1012 are disordered; it reads MEMKHRNPRRAPPKPKPKPNAPTQRPPGRLGRWIRTVSDEDLE. A compositionally biased stretch (basic residues) spans 975-986; sequence RNPRRAPPKPKP. The interaction with VP1 protein stretch occupies residues 1003 to 1012; that stretch reads IRTVSDEDLE.

Homotrimer. A central divalent metal stabilizes the VP2 trimer. Interacts with host ITGA4/ITGB1. As to quaternary structure, homodimer. Interacts (via C-terminus) with VP1 in the cytoplasm. Interacts with VP2. Post-translationally, specific enzymatic cleavages yield mature proteins. The capsid assembly seems to be regulated by polyprotein processing. The protease VP4 cleaves itself off the polyprotein, thus releasing pre-VP2 and VP3 within the infected cell. During capsid assembly, the C-terminus of pre-VP2 is further processed by VP4, giving rise to VP2, the external capsid protein and three small peptides that all stay closely associated with the capsid.

It is found in the virion. The protein localises to the host cytoplasm. In terms of biological role, capsid protein VP2 self assembles to form an icosahedral capsid with a T=13 symmetry, about 70 nm in diameter, and consisting of 260 VP2 trimers. The capsid encapsulates the genomic dsRNA. VP2 is also involved in attachment and entry into the host cell by interacting with host ITGA4/ITGB1. Functionally, the precursor of VP2 plays an important role in capsid assembly. First, pre-VP2 and VP2 oligomers assemble to form a procapsid. Then, the pre-VP2 intermediates may be processed into VP2 proteins by proteolytic cleavage mediated by VP4 to obtain the mature virion. The final capsid is composed of pentamers and hexamers but VP2 has a natural tendency to assemble into all-pentameric structures. Therefore pre-VP2 may be required to allow formation of the hexameric structures. Protease VP4 is a serine protease that cleaves the polyprotein into its final products. Pre-VP2 is first partially cleaved, and may be completely processed by VP4 upon capsid maturation. Its function is as follows. Capsid protein VP3 plays a key role in virion assembly by providing a scaffold for the capsid made of VP2. May self-assemble to form a T=4-like icosahedral inner-capsid composed of at least 180 trimers. Plays a role in genomic RNA packaging by recruiting VP1 into the capsid and interacting with the dsRNA genome segments to form a ribonucleoprotein complex. Additionally, the interaction of the VP3 C-terminal tail with VP1 removes the inherent structural blockade of the polymerase active site. Thus, VP3 can also function as a transcriptional activator. In terms of biological role, structural peptide 1 is a small peptide derived from pre-VP2 C-terminus. It destabilizes and perforates cell membranes, suggesting a role during entry. Functionally, structural peptide 2 is a small peptide derived from pVP2 C-terminus. It is not essential for the virus viability, but viral growth is affected when missing. Structural peptide 3 is a small peptide derived from pVP2 C-terminus. It is not essential for the virus viability, but viral growth is affected when missing. Its function is as follows. Structural peptide 4 is a small peptide derived from pVP2 C-terminus. It is essential for the virus viability. This chain is Structural polyprotein, found in Avian infectious bursal disease virus (strain E) (IBDV).